Here is a 227-residue protein sequence, read N- to C-terminus: Phosphoribosylformylglycinamidine synthase subunit PurQ (227 aa).

The Glutamine amidotransferase type-1 domain maps to 3–227; that stretch reads SSVITFPGSN…FFQNLINNLK (225 aa). Residue Cys85 is the Nucleophile of the active site. Active-site residues include His201 and Glu203.

As to quaternary structure, part of the FGAM synthase complex composed of 1 PurL, 1 PurQ and 2 PurS subunits.

Its subcellular location is the cytoplasm. It catalyses the reaction N(2)-formyl-N(1)-(5-phospho-beta-D-ribosyl)glycinamide + L-glutamine + ATP + H2O = 2-formamido-N(1)-(5-O-phospho-beta-D-ribosyl)acetamidine + L-glutamate + ADP + phosphate + H(+). The enzyme catalyses L-glutamine + H2O = L-glutamate + NH4(+). It participates in purine metabolism; IMP biosynthesis via de novo pathway; 5-amino-1-(5-phospho-D-ribosyl)imidazole from N(2)-formyl-N(1)-(5-phospho-D-ribosyl)glycinamide: step 1/2. Its function is as follows. Part of the phosphoribosylformylglycinamidine synthase complex involved in the purines biosynthetic pathway. Catalyzes the ATP-dependent conversion of formylglycinamide ribonucleotide (FGAR) and glutamine to yield formylglycinamidine ribonucleotide (FGAM) and glutamate. The FGAM synthase complex is composed of three subunits. PurQ produces an ammonia molecule by converting glutamine to glutamate. PurL transfers the ammonia molecule to FGAR to form FGAM in an ATP-dependent manner. PurS interacts with PurQ and PurL and is thought to assist in the transfer of the ammonia molecule from PurQ to PurL. This chain is Phosphoribosylformylglycinamidine synthase subunit PurQ, found in Pelagibacter ubique (strain HTCC1062).